A 367-amino-acid polypeptide reads, in one-letter code: Anthranilate phosphoribosyltransferase (367 aa).

5-phospho-alpha-D-ribose 1-diphosphate is bound by residues glycine 105, 108–109 (GD), threonine 113, 115–118 (NIST), 133–141 (KHGNRAASS), and glycine 145. Glycine 105 contacts anthranilate. Residue serine 117 participates in Mg(2+) binding. Asparagine 136 contributes to the anthranilate binding site. Arginine 191 is a binding site for anthranilate. Residues aspartate 249 and glutamate 250 each contribute to the Mg(2+) site.

Belongs to the anthranilate phosphoribosyltransferase family. In terms of assembly, homodimer. It depends on Mg(2+) as a cofactor.

It catalyses the reaction N-(5-phospho-beta-D-ribosyl)anthranilate + diphosphate = 5-phospho-alpha-D-ribose 1-diphosphate + anthranilate. It participates in amino-acid biosynthesis; L-tryptophan biosynthesis; L-tryptophan from chorismate: step 2/5. Its function is as follows. Catalyzes the transfer of the phosphoribosyl group of 5-phosphorylribose-1-pyrophosphate (PRPP) to anthranilate to yield N-(5'-phosphoribosyl)-anthranilate (PRA). The protein is Anthranilate phosphoribosyltransferase of Corynebacterium jeikeium (strain K411).